The chain runs to 118 residues: Thioredoxin-like protein CXXS1 (118 aa).

Residues 2 to 110 form the Thioredoxin domain; it reads ARVVKIDSAE…IKKRVDGFVQ (109 aa).

This sequence belongs to the thioredoxin family. In terms of tissue distribution, ubiquitous.

Its subcellular location is the cytoplasm. In terms of biological role, possesses low disulfide reductase activity, but efficient protein disulfide isomerase activity. Does not possess deglutathionylation activity. This Arabidopsis thaliana (Mouse-ear cress) protein is Thioredoxin-like protein CXXS1 (CXXS1).